Reading from the N-terminus, the 324-residue chain is Kelch domain-containing protein AF_2170 (324 aa).

Kelch repeat units lie at residues 229-276 (YIFA…VGGE) and 277-323 (YIYI…NNGK).

This chain is Kelch domain-containing protein AF_2170, found in Archaeoglobus fulgidus (strain ATCC 49558 / DSM 4304 / JCM 9628 / NBRC 100126 / VC-16).